The sequence spans 519 residues: Spermidine/putrescine import ATP-binding protein PotA (519 aa).

In terms of domain architecture, ABC transporter spans 6-401 (LHLRDITKIY…PNSLWVANFI (396 aa)). Residue 39 to 46 (GPSGCGKT) participates in ATP binding. Residues 107-270 (RKPKDNVDQS…EQFENKNITR (164 aa)) are insert.

The protein belongs to the ABC transporter superfamily. Spermidine/putrescine importer (TC 3.A.1.11.1) family. As to quaternary structure, the complex is composed of two ATP-binding proteins (PotA), two transmembrane proteins (PotB and PotC) and a solute-binding protein (PotD).

Its subcellular location is the cell membrane. The catalysed reaction is ATP + H2O + polyamine-[polyamine-binding protein]Side 1 = ADP + phosphate + polyamineSide 2 + [polyamine-binding protein]Side 1.. In terms of biological role, part of the ABC transporter complex PotABCD involved in spermidine/putrescine import. Responsible for energy coupling to the transport system. This is Spermidine/putrescine import ATP-binding protein PotA from Ureaplasma parvum serovar 3 (strain ATCC 700970).